The following is a 301-amino-acid chain: Ankyrin repeat domain-containing protein 29 (301 aa).

ANK repeat units lie at residues 11–41, 45–74, 78–107, 111–140, 144–173, 177–206, 210–239, and 242–271; these read PLANAAFWAARRGNLALLKLLLNSGRVDVDC, HGTTLLMVAAYAGHIDCVRELVLQGADINL, SGTTALFFAAQQGHNDVVRFLFGFGASTEF, DGGTALLAASQYGHMQVVETLLKHGANIHD, DGATALFLAAQGGYLDVIRLLLASGAKVNQ, DGTAPLWIASQMGHSEVVRVMLLRGADRDA, DGTTALLKAANKGYNDVIKELLKFSPTLGI, and NGTSALHAAVLSGNIKTVALLLEAGADPSL.

This is Ankyrin repeat domain-containing protein 29 (ANKRD29) from Homo sapiens (Human).